A 279-amino-acid polypeptide reads, in one-letter code: Hydroxyethylthiazole kinase (279 aa).

Met-58 provides a ligand contact to substrate. Residues Lys-134 and Thr-180 each contribute to the ATP site. Gly-207 is a substrate binding site.

Belongs to the Thz kinase family. The cofactor is Mg(2+).

The catalysed reaction is 5-(2-hydroxyethyl)-4-methylthiazole + ATP = 4-methyl-5-(2-phosphooxyethyl)-thiazole + ADP + H(+). The protein operates within cofactor biosynthesis; thiamine diphosphate biosynthesis; 4-methyl-5-(2-phosphoethyl)-thiazole from 5-(2-hydroxyethyl)-4-methylthiazole: step 1/1. Functionally, catalyzes the phosphorylation of the hydroxyl group of 4-methyl-5-beta-hydroxyethylthiazole (THZ). This is Hydroxyethylthiazole kinase from Methanoculleus marisnigri (strain ATCC 35101 / DSM 1498 / JR1).